An 817-amino-acid chain; its full sequence is LPS-assembly protein LptD (817 aa).

The first 26 residues, Met-1–Ala-26, serve as a signal peptide directing secretion. The interval Met-1–Arg-101 is disordered. Low complexity predominate over residues Gly-13 to Ala-90.

The protein belongs to the LptD family. As to quaternary structure, component of the lipopolysaccharide transport and assembly complex. Interacts with LptE and LptA.

The protein resides in the cell outer membrane. Together with LptE, is involved in the assembly of lipopolysaccharide (LPS) at the surface of the outer membrane. The polypeptide is LPS-assembly protein LptD (Azoarcus sp. (strain BH72)).